Consider the following 415-residue polypeptide: Protein ROH1A (415 aa).

The disordered stretch occupies residues 184–219 (VSGGGGGGGGGNKTTERSWSFGRRSGGSSAASKGGA). Residues 185–195 (SGGGGGGGGGN) show a composition bias toward gly residues. The span at 200-219 (RSWSFGRRSGGSSAASKGGA) shows a compositional bias: low complexity. The chain crosses the membrane as a helical span at residues 263 to 283 (MFIMSTVMVFVMWVLTAAVPC).

The protein belongs to the ROH1 family. In terms of assembly, interacts with EXO70A1 and EXO70C1. Binds to EXO70C2. Mainly expressed in cells expanding in a polar manner such as pollen and root hairs.

It is found in the membrane. The protein localises to the cytoplasm. It localises to the cytosol. In terms of biological role, required for seed coat mucilage deposition. The sequence is that of Protein ROH1A from Arabidopsis thaliana (Mouse-ear cress).